A 370-amino-acid chain; its full sequence is Sphingolipid delta(4)-desaturase (370 aa).

3 consecutive transmembrane segments (helical) span residues 68–88 (VMGVVLLQLGIAYYLRHTPVF), 92–112 (FLTLAYVIGATANQAIFLAIH), and 128–148 (LFAVFANIPIGVPYSASFQPY). The Histidine box-1 motif lies at 112–116 (HELSH). Positions 149–153 (HQLHH) match the Histidine box-2 motif. 3 consecutive transmembrane segments (helical) span residues 173–193 (FLSSMPGKLFFAIFQIFFYAL), 197–217 (FITQIKFTYVHLVNVVFQLIF), and 220–240 (VMVTCWGWKALGYFIVSTFLA). The short motif at 299-303 (HNEHH) is the Histidine box-3 element.

This sequence belongs to the fatty acid desaturase type 1 family. DEGS subfamily.

Its subcellular location is the membrane. The catalysed reaction is an N-acylsphinganine + 2 Fe(II)-[cytochrome b5] + O2 + 2 H(+) = an N-acylsphing-4-enine + 2 Fe(III)-[cytochrome b5] + 2 H2O. It functions in the pathway lipid metabolism; sphingolipid metabolism. In terms of biological role, delta(4)-fatty-acid desaturase which introduces a double bond at the 4-position in the long-chain base (LCB) of ceramides. Required for the formation of the monounsaturated sphingoid base (E)-sphing-4-enine during glucosylceramide (GluCer) biosynthesis. The chain is Sphingolipid delta(4)-desaturase from Candida albicans (strain SC5314 / ATCC MYA-2876) (Yeast).